Here is a 417-residue protein sequence, read N- to C-terminus: Ankyrin repeat and SAM domain-containing protein 4B (417 aa).

The tract at residues 1 to 252 is mediates localization to microvilli; the sequence is MSTRYHQAAS…SGDFKEKLQL (252 aa). 3 ANK repeats span residues 31–60, 64–93, and 97–126; these read DGMT…DPDR, WGNT…NIFA, and DLQT…AQNI. Positions 130-164 form a coiled coil; it reads KKVTRLKEQAQKNARRQIKECERLQEKHQNKMAHT. The disordered stretch occupies residues 151 to 195; the sequence is ERLQEKHQNKMAHTYSKEESGTLSSSKGTFSRSSPSNASAPGTFG. Positions 171 to 190 are enriched in polar residues; sequence GTLSSSKGTFSRSSPSNASA. A mediates interaction with MYO7B region spans residues 253-346; it reads SAEEDGSVHH…EWEEDVVDAT (94 aa). A Phosphoserine modification is found at Ser-283. The segment at 305-330 is disordered; sequence RQGASEADEGAADEEGEENGLKDDLP. Residues 310-322 show a composition bias toward acidic residues; sequence EADEGAADEEGEE. Residues 351–403 enclose the SAM domain; that stretch reads FLLSQHLEEFLPIFKREQIDLEALLLCSDEDLQSIQMQLGPRKKVLNAINRRK. The PDZ-binding; mediates interaction with USH1C motif lies at 415-417; sequence TSL.

In terms of assembly, part of the IMAC/intermicrovillar adhesion complex/intermicrovillar tip-link complex composed of ANKS4B, MYO7B, USH1C, CDHR2 and CDHR5. Interacts with USH1C; the interaction is direct and is required for ANKS4B localization to the tip of microvilli. Interacts with MYO7B; the interaction is direct. May interact with HSPA5. In terms of tissue distribution, expressed in kidney and small intestine.

The protein localises to the cell projection. It localises to the microvillus. In terms of biological role, as part of the intermicrovillar adhesion complex/IMAC plays a role in epithelial brush border differentiation, controlling microvilli organization and length. Plays a role in assembly of the complex. May play a role in cellular response to endoplasmic reticulum stress. The chain is Ankyrin repeat and SAM domain-containing protein 4B from Homo sapiens (Human).